We begin with the raw amino-acid sequence, 487 residues long: Histamine H1 receptor (487 aa).

Residues 1-29 (MSLPNSSCLLEDKMCESNKTTMASPQLMP) lie on the Extracellular side of the membrane. Residues Asn-5 and Asn-18 are each glycosylated (N-linked (GlcNAc...) asparagine). Residues 30-50 (LVVVLSTICLVTVGLNLLVLY) traverse the membrane as a helical segment. Residues 51–64 (AVRSERKLHTVGNL) lie on the Cytoplasmic side of the membrane. The chain crosses the membrane as a helical span at residues 65-89 (YIVSLSVADLIVGAVVMPMNILYLL). The Extracellular portion of the chain corresponds to 90 to 97 (MSKWSLGR). A helical membrane pass occupies residues 98-123 (PLCLFWLSMDYVASTASIFSVFILCI). An intrachain disulfide couples Cys-100 to Cys-180. Histamine-binding residues include Asp-107 and Thr-112. Residues 107 to 112 (DYVAST) are important for agonist binding. Residues 124 to 144 (DRYRSVQQPLRYLKYRTKTRA) lie on the Cytoplasmic side of the membrane. Phosphothreonine is present on residues Thr-140 and Thr-142. The chain crosses the membrane as a helical span at residues 145–164 (SATILGAWFLSFLWVIPILG). Residues 165–188 (WNHFMQQTSVRREDKCETDFYDVT) are Extracellular-facing. The chain crosses the membrane as a helical span at residues 189–211 (WFKVMTAIINFYLPTLLMLWFYA). Position 198 (Asn-198) interacts with histamine. The Cytoplasmic segment spans residues 212–416 (KIYKAVRQHC…MNRERKAAKQ (205 aa)). Ser-230 carries the phosphoserine modification. Basic and acidic residues predominate over residues 238-261 (KLRPENPKGDAKKPGKESPWEVLK). Positions 238 to 292 (KLRPENPKGDAKKPGKESPWEVLKRKPKDAGGGSVLKSPSQTPKEMKSPVVFSQE) are disordered. Position 279 is a phosphothreonine (Thr-279). Residues Ser-344 and Ser-347 each carry the phosphoserine modification. The interval 345–377 (EISEDQMLGDSQSFSRTDSDTTTETASGKGKLR) is disordered. The span at 353 to 370 (GDSQSFSRTDSDTTTETA) shows a compositional bias: polar residues. Phosphoserine is present on residues Ser-380, Ser-396, and Ser-398. The helical transmembrane segment at 417–440 (LGFIMAAFILCWIPYFIFFMVIAF) threads the bilayer. The segment at 424 to 428 (FILCW) is important for agonist binding. Tyr-431 is a histamine binding site. The cysteines at positions 441 and 444 are disulfide-linked. Residues 441 to 446 (CKNCCN) are Extracellular-facing. Residues 447–469 (EHLHMFTIWLGYINSTLNPLIYP) form a helical membrane-spanning segment. Residues 470-487 (LCNENFKKTFKRILHIRS) are Cytoplasmic-facing.

The protein belongs to the G-protein coupled receptor 1 family. Post-translationally, phosphorylation at sites in the second and third cytoplasmic loops independently contribute to agonist-induced receptor down-regulation.

It is found in the cell membrane. In terms of biological role, G-protein-coupled receptor for histamine, a biogenic amine that functions as an immune modulator and a neurotransmitter. Through the H1 receptor, histamine mediates the contraction of smooth muscles and increases capillary permeability due to contraction of terminal venules. Also mediates neurotransmission in the central nervous system and thereby regulates circadian rhythms, emotional and locomotor activities as well as cognitive functions. The chain is Histamine H1 receptor from Gorilla gorilla gorilla (Western lowland gorilla).